We begin with the raw amino-acid sequence, 5537 residues long: MDSQKLAGEDKDSEPAADGPAASEDPSATESDLPNPHVGEVSVLSSGSPRLQETPQDCSGGPVRRCALCNCGEPSLHGQRELRRFELPFDWPRCPVVSPGGSPGPNEAVLPSEDLSQIGFPEGLTPAHLGEPGGSCWAHHWCAAWSAGVWGQEGPELCGVDKAIFSGISQRCSHCTRLGASIPCRSPGCPRLYHFPCATASGSFLSMKTLQLLCPEHSEGAAYLEEARCAVCEGPGELCDLFFCTSCGHHYHGACLDTALTARKRAGWQCPECKVCQACRKPGNDSKMLVCETCDKGYHTFCLKPPMEELPAHSWKCKACRVCRACGAGSAELNPNSEWFENYSLCHRCHKAQGGQTIRSVAEQHTPVCSRFSPPEPGDTPTDEPDALYVACQGQPKGGHVTSMQPKEPGPLQCEAKPLGKAGVQLEPQLEAPLNEEMPLLPPPEESPLSPPPEESPTSPPPEASRLSPPPEELPASPLPEALHLSRPLEESPLSPPPEESPLSPPPESSPFSPLEESPLSPPEESPPSPALETPLSPPPEASPLSPPFEESPLSPPPEELPTSPPPEASRLSPPPEESPMSPPPEESPMSPPPEASRLFPPFEESPLSPPPEESPLSPPPEASRLSPPPEDSPMSPPPEESPMSPPPEVSRLSPLPVVSRLSPPPEESPLSPPPEESPTSPPPEASRLSPPPEDSPTSPPPEDSPASPPPEDSLMSLPLEESPLLPLPEEPQLCPRSEGPHLSPRPEEPHLSPRPEEPHLSPQAEEPHLSPQPEEPCLCAVPEEPHLSPQAEGPHLSPQPEELHLSPQTEEPHLSPVPEEPCLSPQPEESHLSPQSEEPCLSPRPEESHLSPELEKPPLSPRPEKPPEEPGQCPAPEELPLFPPPGEPSLSPLLGEPALSEPGEPPLSPLPEELPLSPSGEPSLSPQLMPPDPLPPPLSPIITAAAPPALSPLGELEYPFGAKGDSDPESPLAAPILETPISPPPEANCTDPEPVPPMILPPSPGSPVGPASPILMEPLPPQCSPLLQHSLVPQNSPPSQCSPPALPLSVPSPLSPIGKVVGVSDEAELHEMETEKVSEPECPALEPSATSPLPSPMGDLSCPAPSPAPALDDFSGLGEDTAPLDGIDAPGSQPEPGQTPGSLASELKGSPVLLDPEELAPVTPMEVYPECKQTAGQGSPCEEQEEPRAPVAPTPPTLIKSDIVNEISNLSQGDASASFPGSEPLLGSPDPEGGGSLSMELGVSTDVSPARDEGSLRLCTDSLPETDDSLLCDAGTAISGGKAEGEKGRRRSSPARSRIKQGRSSSFPGRRRPRGGAHGGRGRGRARLKSTASSIETLVVADIDSSPSKEEEEEDDDTMQNTVVLFSNTDKFVLMQDMCVVCGSFGRGAEGHLLACSQCSQCYHPYCVNSKITKVMLLKGWRCVECIVCEVCGQASDPSRLLLCDDCDISYHTYCLDPPLLTVPKGGWKCKWCVSCMQCGAASPGFHCEWQNSYTHCGPCASLVTCPICHAPYVEEDLLIQCRHCERWMHAGCESLFTEDDVEQAADEGFDCVSCQPYVVKPVAPVAPPELVPMKVKEPEPQYFRFEGVWLTETGMALLRNLTMSPLHKRRQRRGRLGLPGEAGLEGSEPSDALGPDDKKDGDLDTDELLKGEGGVEHMECEIKLEGPVSPDVEPGKEETEESKKRKRKPYRPGIGGFMVRQRKSHTRTKKGPAAQAEVLSGDGQPDEVIPADLPAEGAVEQSLAEGDEKKKQQRRGRKKSKLEDMFPAYLQEAFFGKELLDLSRKALFAVGVGRPSFGLGTPKAKGDGGSERKELPTSQKGDDGPDIADEESRGLEGKADTPGPEDGGVKASPVPSDPEKPGTPGEGMLSSDLDRISTEELPKMESKDLQQLFKDVLGSEREQHLGCGTPGLEGSRTPLQRPFLQGGLPLGNLPSSSPMDSYPGLCQSPFLDSRERGGFFSPEPGEPDSPWTGSGGTTPSTPTTPTTEGEGDGLSYNQRSLQRWEKDEELGQLSTISPVLYANINFPNLKQDYPDWSSRCKQIMKLWRKVPAADKAPYLQKAKDNRAAHRINKVQKQAESQINKQTKVGDIARKTDRPALHLRIPPQPGALGSPPPAAAPTIFIGSPTTPAGLSTSADGFLKPPAGSVPGPDSPGELFLKLPPQVPAQVPSQDPFGLAPAYPLEPRFPTAPPTYPPYPSPTGAPAQPPMLGASSRPGAGQPGEFHTTPPGTPRHQPSTPDPFLKPRCPSLDNLAVPESPGVGGGKASEPLLSPPPFGESRKALEVKKEELGASSPSYGPPNLGFVDSPSSGTHLGGLELKTPDVFKAPLTPRASQVEPQSPGLGLRPQEPPPAQALAPSPPSHPDIFRPGSYTDPYAQPPLTPRPQPPPPESCCALPPRSLPSDPFSRVPASPQSQSSSQSPLTPRPLSAEAFCPSPVTPRFQSPDPYSRPPSRPQSRDPFAPLHKPPRPQPPEVAFKAGSLAHTSLGAGGFPAALPAGPAGELHAKVPSGQPPNFVRSPGTGAFVGTPSPMRFTFPQAVGEPSLKPPVPQPGLPPPHGINSHFGPGPTLGKPQSTNYTVATGNFHPSGSPLGPSSGSTGESYGLSPLRPPSVLPPPAPDGSLPYLSHGASQRSGITSPVEKREDPGTGMGSSLATAELPGTQDPGMSGLSQTELEKQRQRQRLRELLIRQQIQRNTLRQEKETAAAAAGAVGPPGSWGAEPSSPAFEQLSRGQTPFAGTQDKSSLVGLPPSKLSGPILGPGSFPSDDRLSRPPPPATPSSMDVNSRQLVGGSQAFYQRAPYPGSLPLQQQQQQLWQQQQATAATSMRFAMSARFPSTPGPELGRQALGSPLAGISTRLPGPGEPVPGPAGPAQFIELRHNVQKGLGPGGTPFPGQGPPQRPRFYPVSEDPHRLAPEGLRGLAVSGLPPQKPSAPPAPELNNSLHPTPHTKGPTLPTGLELVNRPPSSTELGRPNPLALEAGKLPCEDPELDDDFDAHKALEDDEELAHLGLGVDVAKGDDELGTLENLETNDPHLDDLLNGDEFDLLAYTDPELDTGDKKDIFNEHLRLVESANEKAEREALLRGVEPGPLGPEERPPPAADASEPRLASVLPEVKPKVEEGGRHPSPCQFTIATPKVEPAPAANSLGLGLKPGQSMMGSRDTRMGTGPFSSSGHTAEKASFGATGGPPAHLLTPSPLSGPGGSSLLEKFELESGALTLPGGPAASGDELDKMESSLVASELPLLIEDLLEHEKKELQKKQQLSAQLQPAQQQQQQQQQHSLLSAPGPAQAMSLPHEGSSPSLAGSQQQLSLGLAGARQPGLPQPLMPTQPPAHALQQRLAPSMAMVSNQGHMLSGQHGGQAGLVPQQSSQPVLSQKPMGTMPPSMCMKPQQLAMQQQLANSFFPDTDLDKFAAEDIIDPIAKAKMVALKGIKKVMAQGSIGVAPGMNRQQVSLLAQRLSGGPSSDLQNHVAAGSGQERSAGDPSQPRPNPPTFAQGVINEADQRQYEEWLFHTQQLLQMQLKVLEEQIGVHRKSRKALCAKQRTAKKAGREFPEADAEKLKLVTEQQSKIQKQLDQVRKQQKEHTNLMAEYRNKQQQQQQQQQQQQQQHSAVLALSPSQSPRLLTKLPGQLLPGHGLQPPQGPPGGQAGGLRLTPGGMALPGQPGGPFLNTALAQQQQQQHSGGAGSLAGPSGGFFPGNLALRSLGPDSRLLQERQLQLQQQRMQLAQKLQQQQQQQQQQQHLLGQVAIQQQQQQGPGVQTNQALGPKPQGLMPPSSHQGLLVQQLSPQPPQGPQGMLGPAQVAVLQQQHPGALGPQGPHRQVLMTQSRVLSSPQLAQQGQGLMGHRLVTAQQQQQQQQHQQQGSMAGLSHLQQSLMSHSGQPKLSAQPMGSLQQLQQQQQLQQQQQLQQQQQQQLQQQQQLQQQQLQQQQQQQQLQQQQQQQLQQQQQQLQQQQQQQQQQFQQQQQQQQMGLLNQSRTLLSPQQQQQQQVALGPGMPAKPLQHFSSPGALGPTLLLTGKEQNTVDPAVSSEATEGPSTHQGGPLAIGTTPESMATEPGEVKPSLSGDSQLLLVQPQPQPQPSSLQLQPPLRLPGQQQQQVSLLHTAGGGSHGQLGSGSSSEASSVPHLLAQPSVSLGDQPGSMTQNLLGPQQPMLERPMQNNTGPQPPKPGPVLQSGQGLPGVGIMPTVGQLRAQLQGVLAKNPQLRHLSPQQQQQLQALLMQRQLQQSQAVRQTPPYQEPGTQTSPLQGLLGCQPQLGGFPGPQTGPLQELGAGPRPQGPPRLPAPPGALSTGPVLGPVHPTPPPSSPQEPKRPSQLPSPSSQLPTEAQLPPTHPGTPKPQGPTLEPPPGRVSPAAAQLADTLFSKGLGPWDPPDNLAETQKPEQSSLVPGHLDQVNGQVVPEASQLSIKQEPREEPCALGAQSVKREANGEPIGAPGTSNHLLLAGPRSEAGHLLLQKLLRAKNVQLSTGRGSEGLRAEINGHIDSKLAGLEQKLQGTPSNKEDAAARKPLTPKPKRVQKASDRLVSSRKKLRKEDGVRASEALLKQLKQELSLLPLTEPAITANFSLFAPFGSGCPVNGQSQLRGAFGSGALPTGPDYYSQLLTKNNLSNPPTPPSSLPPTPPPSVQQKMVNGVTPSEELGEHPKDAASARDSERALRDTSEVKSLDLLAALPTPPHNQTEDVRMESDEDSDSPDSIVPASSPESILGEEAPRFPHLGSGRWEQEDRALSPVIPLIPRASIPVFPDTKPYGALGLEVPGKLPVTTWEKGKGSEVSVMLTVSAAAAKNLNGVMVAVAELLSMKIPNSYEVLFPESPARAGTEPKKGEAEGPGGKEKGLEGKSPDTGPDWLKQFDAVLPGYTLKSQLDILSLLKQESPAPEPPTQHSYTYNVSNLDVRQLSAPPPEEPSPPPSPLAPSPASPPTEPLVELPTEPLAEPPVPSPLPLASSPESARPKPRARPPEEGEDSRPPRLKKWKGVRWKRLRLLLTIQKGSGRQEDEREVAEFMEQLGTALRPDKVPRDMRRCCFCHEEGDGATDGPARLLNLDLDLWVHLNCALWSTEVYETQGGALMNVEVALHRGLLTKCSLCQRTGATSSCNRMRCPNVYHFACAIRAKCMFFKDKTMLCPMHKIKGPCEQELSSFAVFRRVYIERDEVKQIASIIQRGERLHMFRVGGLVFHAIGQLLPHQMADFHSATALYPVGYEATRIYWSLRTNNRRCCYRCSIGENNGRPEFVIKVIEQGLEDLVFTDASPQAVWNRIIEPVAAMRKEADMLRLFPEYLKGEELFGLTVHAVLRIAESLPGVESCQNYLFRYGRHPLMELPLMINPTGCARSEPKILTHYKRPHTLNSTSMSKAYQSTFTGETNTPYSKQFVHSKSSQYRRLRTEWKNNVYLARSRIQGLGLYAAKDLEKHTMVIEYIGTIIRNEVANRREKIYEEQNRGIYMFRINNEHVIDATLTGGPARYINHSCAPNCVAEVVTFDKEDKIIIISSRRIPKGEELTYDYQFDFEDDQHKIPCHCGAWNCRKWMN.

Residues 1–60 are disordered; it reads MDSQKLAGEDKDSEPAADGPAASEDPSATESDLPNPHVGEVSVLSSGSPRLQETPQDCSG. Phosphoserine is present on Ser27. Polar residues predominate over residues 43–57; that stretch reads VLSSGSPRLQETPQD. The C2HC pre-PHD-type 1; degenerate zinc finger occupies 104-149; sequence GPNEAVLPSEDLSQIGFPEGLTPAHLGEPGGSCWAHHWCAAWSAGV. 3 PHD-type zinc fingers span residues 170–218, 226–276, and 273–323; these read QRCS…PEHS, EARC…CKVC, and CKVC…CRVC. The RING-type 1; atypical zinc finger occupies 229 to 274; the sequence is CAVCEGPGELCDLFFCTSCGHHYHGACLDTALTARKRAGWQCPECK. The RING-type 2; degenerate zinc-finger motif lies at 276 to 321; it reads CQACRKPGNDSKMLVCETCDKGYHTFCLKPPMEELPAHSWKCKACR. Disordered regions lie at residues 368–387, 393–416, 436–1331, and 1340–1359; these read VCSRFSPPEPGDTPTDEPDA, QGQPKGGHVTSMQPKEPGPLQCEA, EEMP…RLKS, and VVADIDSSPSKEEEEEDDDT. Positions 439 to 668 are 15 X 5 AA repeats of S/P-P-P-E/P-E/A; it reads PLLPPPEESP…VSRLSPPPEE (230 aa). Residues 440-473 are compositionally biased toward pro residues; it reads LLPPPEESPLSPPPEESPTSPPPEASRLSPPPEE. 3 tandem repeats follow at residues 442–446, 460–464, and 469–473. The span at 474-483 shows a compositional bias: low complexity; that stretch reads LPASPLPEAL. Pro residues predominate over residues 494 to 509; it reads LSPPPEESPLSPPPES. Tandem repeats lie at residues 496-500 and 504-508. Over residues 510–519 the composition is skewed to low complexity; sequence SPFSPLEESP. Pro residues-rich tracts occupy residues 520–547 and 554–595; these read LSPPEESPPSPALETPLSPPPEASPLSP and LSPP…PPPE. Tandem repeats lie at residues 521–525, 555–559, 564–568, 573–577, and 582–586. Residues 596-607 show a composition bias toward low complexity; the sequence is ASRLFPPFEESP. The span at 608–649 shows a compositional bias: pro residues; the sequence is LSPPPEESPLSPPPEASRLSPPPEDSPMSPPPEESPMSPPPE. Repeat copies occupy residues 609-613, 618-622, 627-631, and 645-649. Residues 650 to 662 show a composition bias toward low complexity; it reads VSRLSPLPVVSRL. Residues 663-667 form repeat 15; it reads SPPPE. Residues 663 to 712 show a composition bias toward pro residues; it reads SPPPEESPLSPPPEESPTSPPPEASRLSPPPEDSPTSPPPEDSPASPPPE. The segment covering 713-725 has biased composition (low complexity); it reads DSLMSLPLEESPL. Phosphoserine is present on Ser744. 2 stretches are compositionally biased toward basic and acidic residues: residues 745 to 760 and 845 to 869; these read PRPEEPHLSPRPEEPH and RPEESHLSPELEKPPLSPRPEKPPE. Low complexity-rich tracts occupy residues 889 to 903 and 911 to 928; these read PSLSPLLGEPALSEP and LPEELPLSPSGEPSLSPQ. The span at 929–940 shows a compositional bias: pro residues; it reads LMPPDPLPPPLS. The segment covering 941–954 has biased composition (low complexity); the sequence is PIITAAAPPALSPL. Residues 994-1008 show a composition bias toward pro residues; that stretch reads EPVPPMILPPSPGSP. Residues 1048-1057 are compositionally biased toward low complexity; that stretch reads PLSVPSPLSP. The segment covering 1068–1080 has biased composition (basic and acidic residues); that stretch reads AELHEMETEKVSE. At Ser1151 the chain carries Phosphoserine. The residue at position 1195 (Thr1195) is a Phosphothreonine. The span at 1207-1216 shows a compositional bias: polar residues; the sequence is EISNLSQGDA. Ser1249 bears the Phosphoserine mark. Position 1267 is a phosphothreonine (Thr1267). Ser1270 bears the Phosphoserine mark. Basic residues-rich tracts occupy residues 1289 to 1302 and 1310 to 1329; these read GRRRSSPARSRIKQ and GRRRPRGGAHGGRGRGRARL. PHD-type zinc fingers lie at residues 1377–1430, 1427–1477, and 1504–1559; these read QDMC…CIVC, CIVC…CVSC, and LVTC…CQPY. The RING-type 3; atypical zinc-finger motif lies at 1507–1557; that stretch reads CPICHAPYVEEDLLIQCRHCERWMHAGCESLFTEDDVEQAADEGFDCVSCQ. Ser1606 is subject to Phosphoserine. Disordered regions lie at residues 1610–1767, 1793–1889, 1904–2002, and 2165–2683; these read KRRQ…LEDM, GVGR…MESK, EQHL…NQRS, and PQVP…QRQR. The span at 1637-1666 shows a compositional bias: basic and acidic residues; that stretch reads PDDKKDGDLDTDELLKGEGGVEHMECEIKL. Ser1671 carries the phosphoserine modification. Residues 1675–1685 are compositionally biased toward basic and acidic residues; that stretch reads EPGKEETEESK. 2 stretches are compositionally biased toward basic residues: residues 1702-1712 and 1753-1762; these read RQRKSHTRTKK and KQQRRGRKKS. Basic and acidic residues-rich tracts occupy residues 1806 to 1825 and 1832 to 1841; these read AKGDGGSERKELPTSQKGDD and EESRGLEGKA. Ser1820 and Ser1834 each carry phosphoserine. 2 positions are modified to phosphothreonine: Thr1843 and Thr1865. The segment covering 1874 to 1889 has biased composition (basic and acidic residues); it reads DLDRISTEELPKMESK. Residues 1979–1990 are compositionally biased toward low complexity; the sequence is TTPSTPTTPTTE. Positions 2190-2209 are enriched in pro residues; it reads PTAPPTYPPYPSPTGAPAQP. Position 2239 is a phosphoserine (Ser2239). Thr2240 carries the post-translational modification Phosphothreonine. Lys2246 is modified (N6-acetyllysine). 2 positions are modified to phosphoserine: Ser2260 and Ser2274. The span at 2280 to 2292 shows a compositional bias: basic and acidic residues; it reads ESRKALEVKKEEL. Ser2309, Ser2311, and Ser2342 each carry phosphoserine. 2 stretches are compositionally biased toward pro residues: residues 2350–2365 and 2379–2393; these read QEPPPAQALAPSPPSH and AQPPLTPRPQPPPPE. Low complexity-rich tracts occupy residues 2409–2431 and 2494–2505; these read SRVPASPQSQSSSQSPLTPRPLS and FPAALPAGPAGE. Arg2535 is subject to Asymmetric dimethylarginine. The segment covering 2547–2560 has biased composition (pro residues); that stretch reads LKPPVPQPGLPPPH. The span at 2574–2584 shows a compositional bias: polar residues; sequence KPQSTNYTVAT. The span at 2589–2609 shows a compositional bias: low complexity; the sequence is PSGSPLGPSSGSTGESYGLSP. Over residues 2610 to 2621 the composition is skewed to pro residues; it reads LRPPSVLPPPAP. Ser2640 carries the post-translational modification Phosphoserine. Residues 2669–2707 adopt a coiled-coil conformation; sequence MSGLSQTELEKQRQRQRLRELLIRQQIQRNTLRQEKETA. The LXXLL motif 1 signature appears at 2686 to 2690; it reads LRELL. Disordered regions lie at residues 2697–2814 and 2835–2996; these read RNTL…QQQQ and ARFP…LDDD. The segment covering 2707–2722 has biased composition (low complexity); it reads AAAAAGAVGPPGSWGA. Polar residues-rich tracts occupy residues 2733-2746 and 2781-2790; these read SRGQTPFAGTQDKS and PSSMDVNSRQ. Arg2836 carries the post-translational modification Asymmetric dimethylarginine. A compositionally biased stretch (pro residues) spans 2931-2940; that stretch reads PQKPSAPPAP. The LXXLL motif 2 motif lies at 3038-3042; that stretch reads LDDLL. The disordered stretch occupies residues 3078 to 3110; it reads EKAEREALLRGVEPGPLGPEERPPPAADASEPR. Lys3079 is modified (N6-acetyllysine). Ser3130 is modified (phosphoserine). Disordered regions lie at residues 3147 to 3209 and 3263 to 3339; these read ANSL…GSSL and KQQL…AHAL. Thr3197 is modified (phosphothreonine). Low complexity-rich tracts occupy residues 3198-3209, 3263-3289, and 3301-3320; these read PSPLSGPGGSSL, KQQLSAQLQPAQQQQQQQQQHSLLSAP, and GSSPSLAGSQQQLSLGLAGA. The residue at position 3199 (Ser3199) is a Phosphoserine. Positions 3249–3282 form a coiled coil; sequence IEDLLEHEKKELQKKQQLSAQLQPAQQQQQQQQQ. Positions 3325 to 3334 are enriched in pro residues; that stretch reads LPQPLMPTQP. At Lys3433 the chain carries N6-acetyllysine. Disordered stretches follow at residues 3462-3499 and 3596-3673; these read LSGGPSSDLQNHVAAGSGQERSAGDPSQPRPNPPTFAQ and RNKQ…GPFL. Residues 3562–3614 are a coiled coil; the sequence is EKLKLVTEQQSKIQKQLDQVRKQQKEHTNLMAEYRNKQQQQQQQQQQQQQQHS. 2 stretches are compositionally biased toward low complexity: residues 3599–3612 and 3631–3643; these read QQQQQQQQQQQQQQ and LPGQLLPGHGLQP. The stretch at 3714–3750 forms a coiled coil; the sequence is RLLQERQLQLQQQRMQLAQKLQQQQQQQQQQQHLLGQ. Arg3727 carries the post-translational modification Asymmetric dimethylarginine. The disordered stretch occupies residues 3758–3802; it reads QQGPGVQTNQALGPKPQGLMPPSSHQGLLVQQLSPQPPQGPQGML. Positions 3897–3975 form a coiled coil; the sequence is LQQLQQQQQL…FQQQQQQQQM (79 aa). The disordered stretch occupies residues 3984–4191; the sequence is LLSPQQQQQQ…GQGLPGVGIM (208 aa). A compositionally biased stretch (low complexity) spans 4012–4023; it reads PGALGPTLLLTG. The span at 4024–4045 shows a compositional bias: polar residues; that stretch reads KEQNTVDPAVSSEATEGPSTHQ. Residues 4073–4108 show a composition bias toward low complexity; that stretch reads SQLLLVQPQPQPQPSSLQLQPPLRLPGQQQQQVSLL. The segment covering 4111-4120 has biased composition (gly residues); it reads AGGGSHGQLG. Residues 4137–4154 are compositionally biased toward polar residues; the sequence is PSVSLGDQPGSMTQNLLG. An Asymmetric dimethylarginine modification is found at Arg4198. Ser4215 carries the post-translational modification Phosphoserine. Positions 4222–4226 match the LXXLL motif 3 motif; that stretch reads LQALL. 2 disordered regions span residues 4233–4398 and 4410–4452; these read QSQA…VPGH and ASQL…LLLA. The segment covering 4237–4251 has biased composition (polar residues); that stretch reads VRQTPPYQEPGTQTS. Positions 4252–4282 are enriched in low complexity; that stretch reads PLQGLLGCQPQLGGFPGPQTGPLQELGAGPR. Positions 4253 to 4257 match the LXXLL motif 4 motif; the sequence is LQGLL. The span at 4283–4293 shows a compositional bias: pro residues; sequence PQGPPRLPAPP. 2 stretches are compositionally biased toward low complexity: residues 4294 to 4305 and 4320 to 4331; these read GALSTGPVLGPV and PSQLPSPSSQLP. Residues 4338–4357 show a composition bias toward pro residues; sequence PTHPGTPKPQGPTLEPPPGR. The residue at position 4359 (Ser4359) is a Phosphoserine. An LXXLL motif 5 motif is present at residues 4463–4467; that stretch reads LQKLL. At Lys4465 the chain carries N6-acetyllysine. 2 disordered regions span residues 4503–4544 and 4613–4727; these read QGTP…KEDG and KNNL…HLGS. The span at 4619–4633 shows a compositional bias: pro residues; it reads PPTPPSSLPPTPPPS. Over residues 4648–4673 the composition is skewed to basic and acidic residues; that stretch reads LGEHPKDAASARDSERALRDTSEVKS. Position 4738 is a phosphoserine (Ser4738). Lys4756 is covalently cross-linked (Glycyl lysine isopeptide (Lys-Gly) (interchain with G-Cter in SUMO2)). At Lys4776 the chain carries N6-acetyllysine. Phosphoserine occurs at positions 4822 and 4849. A disordered region spans residues 4822 to 4857; sequence SPARAGTEPKKGEAEGPGGKEKGLEGKSPDTGPDWL. The segment covering 4828–4849 has biased composition (basic and acidic residues); that stretch reads TEPKKGEAEGPGGKEKGLEGKS. Lys4880 is covalently cross-linked (Glycyl lysine isopeptide (Lys-Gly) (interchain with G-Cter in SUMO2)). The segment at 4905-4980 is disordered; the sequence is QLSAPPPEEP…GEDSRPPRLK (76 aa). Pro residues predominate over residues 4908–4931; sequence APPPEEPSPPPSPLAPSPASPPTE. Residues 4932 to 4941 show a composition bias toward low complexity; sequence PLVELPTEPL. Over residues 4966 to 4976 the composition is skewed to basic and acidic residues; it reads RPPEEGEDSRP. An LXXLL motif 6 motif is present at residues 4990–4994; it reads LRLLL. The C2HC pre-PHD-type 2 zinc finger occupies 5029–5069; that stretch reads MRRCCFCHEEGDGATDGPARLLNLDLDLWVHLNCALWSTEV. A PHD-type 7 zinc finger spans residues 5090–5137; the sequence is TKCSLCQRTGATSSCNRMRCPNVYHFACAIRAKCMFFKDKTMLCPMHK. The FYR N-terminal domain occupies 5175-5235; sequence LHMFRVGGLV…CCYRCSIGEN (61 aa). In terms of domain architecture, FYR C-terminal spans 5236–5321; that stretch reads NGRPEFVIKV…ESCQNYLFRY (86 aa). The short motif at 5337–5342 is the WDR5 interaction motif (WIN) element; sequence GCARSE. One can recognise an SET domain in the interval 5397–5513; that stretch reads NNVYLARSRI…KGEELTYDYQ (117 aa). Residues Tyr5451 and 5474 to 5475 contribute to the S-adenosyl-L-methionine site; that span reads NH. Cys5477, Cys5525, Cys5527, and Cys5532 together coordinate Zn(2+). Positions 5521-5537 constitute a Post-SET domain; sequence HKIPCHCGAWNCRKWMN.

This sequence belongs to the class V-like SAM-binding methyltransferase superfamily. Histone-lysine methyltransferase family. TRX/MLL subfamily. As to quaternary structure, component of the MLL2 complex (also named ASCOM complex), at least composed of catalytic subunit KMT2D/MLL2, ASH2L, RBBP5, WDR5, NCOA6, DPY30, KDM6A, PAXIP1/PTIP, PAGR1 and alpha- and beta-tubulin. Forms a core complex with the evolutionary conserved subcomplex WRAD composed of WDR5, RBBP5, ASH2L/ASH2 and DPY30 subunits; WRAD differentially stimulates the methyltransferase activity. Interacts with ESR1; interaction is direct. Interacts (via WIN motif) with WDR5. In terms of tissue distribution, expressed in most adult tissues, including a variety of hematoipoietic cells, with the exception of the liver.

The protein localises to the nucleus. It catalyses the reaction L-lysyl(4)-[histone H3] + S-adenosyl-L-methionine = N(6)-methyl-L-lysyl(4)-[histone H3] + S-adenosyl-L-homocysteine + H(+). In terms of biological role, histone methyltransferase that catalyzes methyl group transfer from S-adenosyl-L-methionine to the epsilon-amino group of 'Lys-4' of histone H3 (H3K4). Part of chromatin remodeling machinery predominantly forms H3K4me1 methylation marks at active chromatin sites where transcription and DNA repair take place. Acts as a coactivator for estrogen receptor by being recruited by ESR1, thereby activating transcription. This is Histone-lysine N-methyltransferase 2D (KMT2D) from Homo sapiens (Human).